The chain runs to 366 residues: tRNA/tmRNA (uracil-C(5))-methyltransferase (366 aa).

Residues Gln190, Tyr218, Asn223, Glu239, and Asp299 each contribute to the S-adenosyl-L-methionine site. Catalysis depends on Cys324, which acts as the Nucleophile. The active-site Proton acceptor is the Glu358.

The protein belongs to the class I-like SAM-binding methyltransferase superfamily. RNA M5U methyltransferase family. TrmA subfamily.

It catalyses the reaction uridine(54) in tRNA + S-adenosyl-L-methionine = 5-methyluridine(54) in tRNA + S-adenosyl-L-homocysteine + H(+). The catalysed reaction is uridine(341) in tmRNA + S-adenosyl-L-methionine = 5-methyluridine(341) in tmRNA + S-adenosyl-L-homocysteine + H(+). Its function is as follows. Dual-specificity methyltransferase that catalyzes the formation of 5-methyluridine at position 54 (m5U54) in all tRNAs, and that of position 341 (m5U341) in tmRNA (transfer-mRNA). In Shigella dysenteriae serotype 1 (strain Sd197), this protein is tRNA/tmRNA (uracil-C(5))-methyltransferase.